Consider the following 254-residue polypeptide: Ubiquinone/menaquinone biosynthesis C-methyltransferase UbiE (254 aa).

Residues threonine 77, aspartate 98, 126–127, and serine 143 each bind S-adenosyl-L-methionine; that span reads NA.

Belongs to the class I-like SAM-binding methyltransferase superfamily. MenG/UbiE family.

The enzyme catalyses a 2-demethylmenaquinol + S-adenosyl-L-methionine = a menaquinol + S-adenosyl-L-homocysteine + H(+). It carries out the reaction a 2-methoxy-6-(all-trans-polyprenyl)benzene-1,4-diol + S-adenosyl-L-methionine = a 5-methoxy-2-methyl-3-(all-trans-polyprenyl)benzene-1,4-diol + S-adenosyl-L-homocysteine + H(+). It participates in quinol/quinone metabolism; menaquinone biosynthesis; menaquinol from 1,4-dihydroxy-2-naphthoate: step 2/2. Its pathway is cofactor biosynthesis; ubiquinone biosynthesis. Methyltransferase required for the conversion of demethylmenaquinol (DMKH2) to menaquinol (MKH2) and the conversion of 2-polyprenyl-6-methoxy-1,4-benzoquinol (DDMQH2) to 2-polyprenyl-3-methyl-6-methoxy-1,4-benzoquinol (DMQH2). In Hydrogenovibrio crunogenus (strain DSM 25203 / XCL-2) (Thiomicrospira crunogena), this protein is Ubiquinone/menaquinone biosynthesis C-methyltransferase UbiE.